The following is a 129-amino-acid chain: Peptidyl-prolyl cis-trans isomerase pin4 (129 aa).

A disordered region spans residues M1 to P34. Residues G9 to K26 are compositionally biased toward basic and acidic residues. The region spanning A35 to G127 is the PpiC domain.

Belongs to the PpiC/parvulin rotamase family. PIN4 subfamily.

It catalyses the reaction [protein]-peptidylproline (omega=180) = [protein]-peptidylproline (omega=0). Functionally, PPIases accelerate the folding of proteins. It catalyzes the cis-trans isomerization of proline imidic peptide bonds in oligopeptides. This Aspergillus fumigatus (strain ATCC MYA-4609 / CBS 101355 / FGSC A1100 / Af293) (Neosartorya fumigata) protein is Peptidyl-prolyl cis-trans isomerase pin4 (pin4).